The following is a 291-amino-acid chain: 4-diphosphocytidyl-2-C-methyl-D-erythritol kinase (291 aa).

Residue K11 is part of the active site. Residue 97–107 (PVAAGIGGGSS) participates in ATP binding. The active site involves D139.

This sequence belongs to the GHMP kinase family. IspE subfamily.

It carries out the reaction 4-CDP-2-C-methyl-D-erythritol + ATP = 4-CDP-2-C-methyl-D-erythritol 2-phosphate + ADP + H(+). Its pathway is isoprenoid biosynthesis; isopentenyl diphosphate biosynthesis via DXP pathway; isopentenyl diphosphate from 1-deoxy-D-xylulose 5-phosphate: step 3/6. Catalyzes the phosphorylation of the position 2 hydroxy group of 4-diphosphocytidyl-2C-methyl-D-erythritol. This Methylorubrum extorquens (strain CM4 / NCIMB 13688) (Methylobacterium extorquens) protein is 4-diphosphocytidyl-2-C-methyl-D-erythritol kinase.